A 120-amino-acid chain; its full sequence is Transmembrane protein 010R (120 aa).

Transmembrane regions (helical) follow at residues 40–60 and 72–92; these read FCGA…ATAT and SIFF…VWFL.

It belongs to the IIV-6 010R family.

Its subcellular location is the membrane. This is Transmembrane protein 010R from Invertebrate iridescent virus 6 (IIV-6).